The following is a 571-amino-acid chain: Cyclic di-GMP phosphodiesterase TpdA (571 aa).

Helical transmembrane passes span 155 to 175 (IAWVLLVTTAIFFSVCYYAIN), 321 to 341 (VYYISGPLKSIILLSLFFLVI), and 395 to 415 (TLISNGLLLIHTILVIRAIYA). One can recognise an EAL domain in the interval 344 to 571 (HRSLQAFITY…HQGYFYPLHF (228 aa)).

It localises to the cell inner membrane. It catalyses the reaction 3',3'-c-di-GMP + H2O = 5'-phosphoguanylyl(3'-&gt;5')guanosine + H(+). In terms of biological role, cyclic di-GMP phosphodiesterase that plays an important role in modulating the global c-di-GMP pool. Its ability to alter the c-di-GMP pool has an effect on swimming motility, swarming motility and biofilm formation, multicellular behaviors that are important for the survival and dissemination of this environmental pathogen. Exhibits a dual function, namely, c-di-GMP degradation and modulation of its own expression. This Vibrio parahaemolyticus serotype O3:K6 (strain RIMD 2210633) protein is Cyclic di-GMP phosphodiesterase TpdA.